The primary structure comprises 427 residues: Enolase (427 aa).

Residue glutamine 163 participates in (2R)-2-phosphoglycerate binding. Residue glutamate 205 is the Proton donor of the active site. Mg(2+)-binding residues include aspartate 242, glutamate 285, and aspartate 312. (2R)-2-phosphoglycerate-binding residues include lysine 337, arginine 366, serine 367, and lysine 388. Lysine 337 serves as the catalytic Proton acceptor.

This sequence belongs to the enolase family. Mg(2+) serves as cofactor.

Its subcellular location is the cytoplasm. It localises to the secreted. It is found in the cell surface. It catalyses the reaction (2R)-2-phosphoglycerate = phosphoenolpyruvate + H2O. It functions in the pathway carbohydrate degradation; glycolysis; pyruvate from D-glyceraldehyde 3-phosphate: step 4/5. Its function is as follows. Catalyzes the reversible conversion of 2-phosphoglycerate (2-PG) into phosphoenolpyruvate (PEP). It is essential for the degradation of carbohydrates via glycolysis. In Burkholderia ambifaria (strain MC40-6), this protein is Enolase.